The sequence spans 286 residues: Pantothenate synthetase (286 aa).

An ATP-binding site is contributed by 30–37 (MGFLHEGH). Histidine 37 serves as the catalytic Proton donor. Glutamine 61 lines the (R)-pantoate pocket. Glutamine 61 is a beta-alanine binding site. 147-150 (GLKD) serves as a coordination point for ATP. (R)-pantoate is bound at residue glutamine 153. ATP contacts are provided by residues valine 176 and 184–187 (KSSR).

Belongs to the pantothenate synthetase family. Homodimer.

The protein resides in the cytoplasm. The enzyme catalyses (R)-pantoate + beta-alanine + ATP = (R)-pantothenate + AMP + diphosphate + H(+). The protein operates within cofactor biosynthesis; (R)-pantothenate biosynthesis; (R)-pantothenate from (R)-pantoate and beta-alanine: step 1/1. Functionally, catalyzes the condensation of pantoate with beta-alanine in an ATP-dependent reaction via a pantoyl-adenylate intermediate. This chain is Pantothenate synthetase, found in Bacillus subtilis (strain 168).